An 87-amino-acid chain; its full sequence is U3-theraphotoxin-Hhn1a 7 (87 aa).

Positions 1-24 (MVNMKASMFLTFAGLVLLFVVSYA) are cleaved as a signal peptide. The propeptide occupies 25 to 52 (SESEEKEFPKEMLSSIFAVDNDFKQEER). Cystine bridges form between Cys-54-Cys-67, Cys-61-Cys-72, and Cys-66-Cys-79.

This sequence belongs to the neurotoxin 10 (Hwtx-1) family. 51 (Hntx-8) subfamily. Hntx-8 sub-subfamily. Expressed by the venom gland.

It localises to the secreted. Ion channel inhibitor. This Cyriopagopus hainanus (Chinese bird spider) protein is U3-theraphotoxin-Hhn1a 7.